The sequence spans 350 residues: Histidinol-phosphate aminotransferase 1 (350 aa).

Lys-210 is subject to N6-(pyridoxal phosphate)lysine.

The protein belongs to the class-II pyridoxal-phosphate-dependent aminotransferase family. Histidinol-phosphate aminotransferase subfamily. As to quaternary structure, homodimer. Pyridoxal 5'-phosphate serves as cofactor.

The enzyme catalyses L-histidinol phosphate + 2-oxoglutarate = 3-(imidazol-4-yl)-2-oxopropyl phosphate + L-glutamate. It functions in the pathway amino-acid biosynthesis; L-histidine biosynthesis; L-histidine from 5-phospho-alpha-D-ribose 1-diphosphate: step 7/9. This Pseudomonas fluorescens (strain ATCC BAA-477 / NRRL B-23932 / Pf-5) protein is Histidinol-phosphate aminotransferase 1.